The sequence spans 258 residues: Calcium release-activated calcium channel protein 1 (258 aa).

The Cytoplasmic segment spans residues 1 to 63 (MYPECGVETK…SRAKLKASSR (63 aa)). A helical membrane pass occupies residues 64–81 (TSALLSGFAMVAMVEVQL). Over 82 to 91 (EPNHAYPPGL) the chain is Extracellular. The helical transmembrane segment at 92–112 (LIAFSACTTVLVAVHLFALMV) threads the bilayer. Residues 113–145 (STCILPNIEAVSNVHNLNSVKESPHERMHHHIE) are Cytoplasmic-facing. A helical membrane pass occupies residues 146–166 (LAWAFSTVIGTLLFLAEVVLL). The Extracellular segment spans residues 167 to 192 (CWVKFLPVNSPKISSNETSAVSSGQA). Asn-182 carries an N-linked (GlcNAc...) asparagine glycan. A helical transmembrane segment spans residues 193 to 213 (AAITSTAIMVPFGLVFIVFAV). Over 214–258 (HFYRSLVSHKTDRQFQELNELAELAQLQDQLDHRGDPVQSPVHYA) the chain is Cytoplasmic.

It belongs to the Orai family.

It is found in the cell membrane. In terms of biological role, ca(2+) release-activated Ca(2+) (CRAC) channel subunit which mediates Ca(2+) influx following depletion of intracellular Ca(2+) stores. The sequence is that of Calcium release-activated calcium channel protein 1 (orai1) from Xenopus laevis (African clawed frog).